The sequence spans 71 residues: Small ribosomal subunit protein bS21 (71 aa).

This sequence belongs to the bacterial ribosomal protein bS21 family.

This is Small ribosomal subunit protein bS21 from Nitrosococcus oceani (strain ATCC 19707 / BCRC 17464 / JCM 30415 / NCIMB 11848 / C-107).